Consider the following 790-residue polypeptide: Cadherin-20 (790 aa).

The signal sequence occupies residues 1-25; that stretch reads MSCKRSYHRHCALVYYMVLLDLTNA. Positions 26–52 are excised as a propeptide; it reads VFEFSHPLIRDSGNSQSRQLLHHRLKR. Residues 26–612 are Extracellular-facing; it reads VFEFSHPLIR…PYTLPISLSR (587 aa). 5 Cadherin domains span residues 54–158, 159–267, 268–382, 383–487, and 487–605; these read WVWN…EPKF, LDGP…PPRF, PQKH…PPVF, GSSF…APTF, and FTKF…EPYT. 5 N-linked (GlcNAc...) asparagine glycosylation sites follow: asparagine 254, asparagine 283, asparagine 413, asparagine 454, and asparagine 535. Residues 613–633 traverse the membrane as a helical segment; the sequence is GALIAILTCIFVLLVLVLLIL. Over 634–790 the chain is Cytoplasmic; it reads SMRRHRKQPY…YGTKDNNGSL (157 aa).

As to expression, detected in embryonic posterior neural plate, embryonic neural tube, sulcus limitans and embryonic kidney.

It localises to the cell membrane. Functionally, cadherins are calcium-dependent cell adhesion proteins. They preferentially interact with themselves in a homophilic manner in connecting cells; cadherins may thus contribute to the sorting of heterogeneous cell types. This chain is Cadherin-20 (cdh20), found in Xenopus laevis (African clawed frog).